The primary structure comprises 234 residues: CHD1 helical C-terminal domain containing protein 1 (234 aa).

The segment at 1 to 38 is disordered; sequence MEASDGQADEREEPLEQGTNARSLERRSSTTPAKDSLV. A CHD1 helical C-terminal domain (CHCT) region spans residues 44–145; sequence LDRDTFKICK…NNQTTKFLMA (102 aa). A disordered region spans residues 200-234; sequence LRARGPRRRGSKLPQEPKLKRRRIKEAPDTPETCL.

The protein localises to the cytoplasm. The protein resides in the nucleus. In terms of biological role, may play a role in regulation of apoptosis. The sequence is that of CHD1 helical C-terminal domain containing protein 1 (CHCT1) from Bos taurus (Bovine).